The following is a 572-amino-acid chain: Arginine--tRNA ligase (572 aa).

The short motif at 122-132 (PNLAKEMHVGH) is the 'HIGH' region element.

The protein belongs to the class-I aminoacyl-tRNA synthetase family. Monomer.

Its subcellular location is the cytoplasm. It carries out the reaction tRNA(Arg) + L-arginine + ATP = L-arginyl-tRNA(Arg) + AMP + diphosphate. The chain is Arginine--tRNA ligase from Neisseria meningitidis serogroup B (strain ATCC BAA-335 / MC58).